Reading from the N-terminus, the 226-residue chain is Lipoprotein-releasing system ATP-binding protein LolD (226 aa).

Residues 6 to 226 (LSVEQVSKSF…QLQQGSLIRI (221 aa)) form the ABC transporter domain. 42–49 (GESGCGKS) contributes to the ATP binding site.

It belongs to the ABC transporter superfamily. Lipoprotein translocase (TC 3.A.1.125) family. In terms of assembly, the complex is composed of two ATP-binding proteins (LolD) and two transmembrane proteins (LolC and LolE).

It is found in the cell inner membrane. Functionally, part of the ABC transporter complex LolCDE involved in the translocation of mature outer membrane-directed lipoproteins, from the inner membrane to the periplasmic chaperone, LolA. Responsible for the formation of the LolA-lipoprotein complex in an ATP-dependent manner. In Treponema pallidum (strain Nichols), this protein is Lipoprotein-releasing system ATP-binding protein LolD.